Reading from the N-terminus, the 260-residue chain is UPF0246 protein Bcep18194_A5551 (260 aa).

It belongs to the UPF0246 family.

In Burkholderia lata (strain ATCC 17760 / DSM 23089 / LMG 22485 / NCIMB 9086 / R18194 / 383), this protein is UPF0246 protein Bcep18194_A5551.